A 233-amino-acid chain; its full sequence is Large ribosomal subunit protein uL1 (233 aa).

It belongs to the universal ribosomal protein uL1 family. As to quaternary structure, part of the 50S ribosomal subunit.

In terms of biological role, binds directly to 23S rRNA. The L1 stalk is quite mobile in the ribosome, and is involved in E site tRNA release. Its function is as follows. Protein L1 is also a translational repressor protein, it controls the translation of the L11 operon by binding to its mRNA. The polypeptide is Large ribosomal subunit protein uL1 (Hamiltonella defensa subsp. Acyrthosiphon pisum (strain 5AT)).